Here is a 571-residue protein sequence, read N- to C-terminus: Proline--tRNA ligase (571 aa).

This sequence belongs to the class-II aminoacyl-tRNA synthetase family. ProS type 1 subfamily. In terms of assembly, homodimer.

It is found in the cytoplasm. It catalyses the reaction tRNA(Pro) + L-proline + ATP = L-prolyl-tRNA(Pro) + AMP + diphosphate. Catalyzes the attachment of proline to tRNA(Pro) in a two-step reaction: proline is first activated by ATP to form Pro-AMP and then transferred to the acceptor end of tRNA(Pro). As ProRS can inadvertently accommodate and process non-cognate amino acids such as alanine and cysteine, to avoid such errors it has two additional distinct editing activities against alanine. One activity is designated as 'pretransfer' editing and involves the tRNA(Pro)-independent hydrolysis of activated Ala-AMP. The other activity is designated 'posttransfer' editing and involves deacylation of mischarged Ala-tRNA(Pro). The misacylated Cys-tRNA(Pro) is not edited by ProRS. In Leuconostoc citreum (strain KM20), this protein is Proline--tRNA ligase.